The sequence spans 508 residues: GMP synthase [glutamine-hydrolyzing] (508 aa).

The Glutamine amidotransferase type-1 domain maps to 1–189; the sequence is MILVLDFGSQ…ALLVCGCEKT (189 aa). The active-site Nucleophile is the C78. Active-site residues include H163 and E165. The region spanning 190–383 is the GMPS ATP-PPase domain; it reads WGMQHFAQRE…LGVSQDFLMR (194 aa). An ATP-binding site is contributed by 217–223; it reads SGGVDST.

As to quaternary structure, homodimer.

It catalyses the reaction XMP + L-glutamine + ATP + H2O = GMP + L-glutamate + AMP + diphosphate + 2 H(+). It functions in the pathway purine metabolism; GMP biosynthesis; GMP from XMP (L-Gln route): step 1/1. Catalyzes the synthesis of GMP from XMP. The polypeptide is GMP synthase [glutamine-hydrolyzing] (Helicobacter pylori (strain P12)).